A 506-amino-acid polypeptide reads, in one-letter code: MSLSIVHTRAALGVNAPPITVEVHISKGLPGLTMVGLPETTVKEARDRVRSAIINSGYEYPAKKITINLAPADLPKEGGRYDLPIAIALLAASEQLTANKLDEYELVGELALTGALRGVPGAISSATEAIKSGRKIIVAKDNEDEVGLINGEGCLIADHLQAVCAFLEGKHALERPKPTDAVSRALQHDLSDVIGQEQGKRGLEITAAGGHNLLLIGPPGTGKTMLASRINGLLPDLSNEEALESAAILSLVNAESVQKQWRQRPFRSPHHSASLTAMVGGGAIPGPGEISLAHNGVLFLDELPEFERRTLDALREPIESGQIHLSRTRAKITYPARFQLVAAMNPSPTGHYQGNHNRCTPEQTLRYLNRLSGPFLDRFDLSLEIPLPPPGILSKTVVPGESSATVKQRVMAARERQFKRQNKLNAWLDSPEIRQFCKLESEDAMWLEGTLIHLGLSIRAWQRLLKVARTIADIDQSDIITRQHLQEAVSYRAIDRLLIHLQKLLT.

It belongs to the Mg-chelatase subunits D/I family. ComM subfamily.

This is an uncharacterized protein from Escherichia coli (strain K12).